The primary structure comprises 521 residues: Lysine--tRNA ligase (521 aa).

Positions 32-40 match the 'HIGH' region motif; that stretch reads PSGTVHIGN. Positions 280–284 match the 'KMSKS' region motif; the sequence is KISSS.

Belongs to the class-I aminoacyl-tRNA synthetase family.

Its subcellular location is the cytoplasm. The catalysed reaction is tRNA(Lys) + L-lysine + ATP = L-lysyl-tRNA(Lys) + AMP + diphosphate. This chain is Lysine--tRNA ligase, found in Borrelia garinii subsp. bavariensis (strain ATCC BAA-2496 / DSM 23469 / PBi) (Borreliella bavariensis).